The chain runs to 302 residues: Nucleotide-binding protein Bcenmc03_2806 (302 aa).

Residue Gly8–Ser15 coordinates ATP. A GTP-binding site is contributed by Asp57–Ser60.

This sequence belongs to the RapZ-like family.

In terms of biological role, displays ATPase and GTPase activities. In Burkholderia orbicola (strain MC0-3), this protein is Nucleotide-binding protein Bcenmc03_2806.